We begin with the raw amino-acid sequence, 90 residues long: Protein LIM1 (90 aa).

The N-terminal stretch at 1 to 26 is a signal peptide; that stretch reads MASMKSLATAILVVLLLAALSREGRS. Intrachain disulfides connect Cys29–Cys66, Cys39–Cys55, Cys56–Cys81, and Cys68–Cys88.

Belongs to the A9/FIL1 family.

Its subcellular location is the secreted. The sequence is that of Protein LIM1 (LIM1) from Lilium longiflorum (Trumpet lily).